The chain runs to 894 residues: LRR receptor-like serine/threonine-protein kinase IOS1 (894 aa).

The signal sequence occupies residues 1–23; that stretch reads MAFSSCFLLVLLQIFSALLLCLA. Residues 24–515 lie on the Extracellular side of the membrane; sequence QDQSGFISLD…KKKKNTVIAP (492 aa). N-linked (GlcNAc...) asparagine glycosylation is found at Asn-48, Asn-95, Asn-137, Asn-179, Asn-223, Asn-230, Asn-260, Asn-287, Asn-309, Asn-338, Asn-399, Asn-441, Asn-462, and Asn-469. 2 LRR repeats span residues 431 to 457 and 459 to 479; these read LTSLEVLDLSNNSLTGSVPEFLANMET and KLINLSGNELNGSIPATLLDK. Residues 516 to 536 traverse the membrane as a helical segment; the sequence is VAASLVSVFLIGAGIVTFLIL. Over 537 to 894 the chain is Cytoplasmic; the sequence is KRKKRTKLGL…FTTELNPGAR (358 aa). Residue Thr-577 is modified to Phosphothreonine. The 273-residue stretch at 586-858 folds into the Protein kinase domain; that stretch reads NNFERVLGRG…QVVMDLKECL (273 aa). ATP-binding positions include 592–600 and Lys-613; that span reads LGRGGFGVV. At Tyr-658 the chain carries Phosphotyrosine. Asp-710 acts as the Proton acceptor in catalysis. Residue Ser-744 is modified to Phosphoserine. Phosphothreonine occurs at positions 745 and 750. Tyr-758 carries the phosphotyrosine modification.

It belongs to the protein kinase superfamily. Ser/Thr protein kinase family. Homodimerization. Interacts with BAK1 and FLS2; triggers FLS2-BAK1 complex formation upon microbe-associated molecular patterns (MAMPs) treatment. Also binds to CERK1 and EFR. Expressed in roots, cotyledons, leaves, flowers and siliques.

It is found in the cell membrane. Functionally, negatively regulates the abscisic acid (ABA) signaling pathway. Required for full susceptibility to filamentous (hemi)biotrophic oomycetes (e.g. H.arabidopsidis and P.parasitica) and fungal (e.g. E.cruciferarum) pathogens, probably by triggering the repression of ABA-sensitive COLD REGULATED and RESISTANCE TO DESICCATION genes during infection, but independently of immune responses. Involved in BAK1-dependent and BAK1-independent microbe-associated molecular patterns (MAMPs)-triggered immunity (PTI) leading to defense responses, including callose deposition and MAPK cascade activation, toward pathogenic bacteria (e.g. P.syringae). Required for chitin-mediated PTI. The sequence is that of LRR receptor-like serine/threonine-protein kinase IOS1 from Arabidopsis thaliana (Mouse-ear cress).